The chain runs to 189 residues: Peptidyl-tRNA hydrolase (189 aa).

Tyrosine 14 is a tRNA binding site. The active-site Proton acceptor is the histidine 19. Residues tyrosine 64, asparagine 66, and asparagine 112 each coordinate tRNA.

It belongs to the PTH family. Monomer.

It localises to the cytoplasm. The enzyme catalyses an N-acyl-L-alpha-aminoacyl-tRNA + H2O = an N-acyl-L-amino acid + a tRNA + H(+). In terms of biological role, hydrolyzes ribosome-free peptidyl-tRNAs (with 1 or more amino acids incorporated), which drop off the ribosome during protein synthesis, or as a result of ribosome stalling. Functionally, catalyzes the release of premature peptidyl moieties from peptidyl-tRNA molecules trapped in stalled 50S ribosomal subunits, and thus maintains levels of free tRNAs and 50S ribosomes. The chain is Peptidyl-tRNA hydrolase from Finegoldia magna (strain ATCC 29328 / DSM 20472 / WAL 2508) (Peptostreptococcus magnus).